The primary structure comprises 215 residues: Cytochrome b6 (215 aa).

Residues 32–52 form a helical membrane-spanning segment; sequence IFYCLGGIVFVSFLIQVATGF. Heme c is bound at residue cysteine 35. Residues histidine 86 and histidine 100 each coordinate heme b. 3 consecutive transmembrane segments (helical) span residues 90–110, 116–136, and 186–206; these read ASMMVLMMILHVFRVYLTGGF, LTWVTGVILGVLTVSFGVTGY, and LHTFVLPLLTAVFMLMHFLMI. 2 residues coordinate heme b: histidine 187 and histidine 202.

It belongs to the cytochrome b family. PetB subfamily. The 4 large subunits of the cytochrome b6-f complex are cytochrome b6, subunit IV (17 kDa polypeptide, PetD), cytochrome f and the Rieske protein, while the 4 small subunits are PetG, PetL, PetM and PetN. The complex functions as a dimer. Heme b serves as cofactor. The cofactor is heme c.

It is found in the plastid. Its subcellular location is the chloroplast thylakoid membrane. Functionally, component of the cytochrome b6-f complex, which mediates electron transfer between photosystem II (PSII) and photosystem I (PSI), cyclic electron flow around PSI, and state transitions. This Porphyra purpurea (Red seaweed) protein is Cytochrome b6.